Consider the following 504-residue polypeptide: Anaerobic nitric oxide reductase transcription regulator NorR (504 aa).

Aspartate 57 bears the 4-aspartylphosphate mark. Residues 187–416 (MIGLSPGMTQ…LEHAIHRAVV (230 aa)) form the Sigma-54 factor interaction domain. Residues 215 to 222 (GETGTGKE) and 278 to 287 (ADNGTLFLDE) each bind ATP. The segment at residues 479–498 (WAACARMLETDVANLHRLAK) is a DNA-binding region (H-T-H motif).

The protein operates within nitrogen metabolism; nitric oxide reduction. Its function is as follows. Required for the expression of anaerobic nitric oxide (NO) reductase, acts as a transcriptional activator for at least the norVW operon. Activation also requires sigma-54. The polypeptide is Anaerobic nitric oxide reductase transcription regulator NorR (Shigella sonnei (strain Ss046)).